A 434-amino-acid chain; its full sequence is MAMAKNVVVIGAQWGDEGKGKIVDWLAEEAGGVVRFQGGHNAGHTLVVGGKKTILRLIPSGILHEGLDCFIGSGVVVSPEALLGEIDELNAAGVKNVEGRLKIAPTCPLILPYHIALDQAREASRGKGKIGTTGRGIGPAYEDKVARRAIRAADLLHPEKLREKLDAVLAYYNVQLQYLHNAGPVKAEDVMAVIEKVAPRIAPMIADVSRVLNEKNKNGEKLLFEGAQGALLDIDYGTYPFVTSSNCLAGAASAGAGVGPQMLDYVLGIVKAYTTRVGSGPFPTELFDEVGAGLAERGHEFGSVTGRARRCGWFDAAALKRSIQINGISGMCITKLDVMDGVETINICVGYELPGGGKTDILPCGSDAVETCKPIYETMPGWRESTVGVKSYDALPANAKAYLKRIEEVCGAPVAIVSTGPDREETIVLHHPFA.

Residues G15 to K21 and G43 to T45 contribute to the GTP site. Residue D16 is the Proton acceptor of the active site. 2 residues coordinate Mg(2+): D16 and G43. Residues D16–K19, N41–H44, T133, R147, Q228, T243, and R307 each bind IMP. H44 (proton donor) is an active-site residue. S303–R309 is a substrate binding site. Residues R309, K335–D337, and S418–G420 each bind GTP.

Belongs to the adenylosuccinate synthetase family. Homodimer. Mg(2+) is required as a cofactor.

The protein resides in the cytoplasm. The catalysed reaction is IMP + L-aspartate + GTP = N(6)-(1,2-dicarboxyethyl)-AMP + GDP + phosphate + 2 H(+). Its pathway is purine metabolism; AMP biosynthesis via de novo pathway; AMP from IMP: step 1/2. Functionally, plays an important role in the de novo pathway of purine nucleotide biosynthesis. Catalyzes the first committed step in the biosynthesis of AMP from IMP. In Neisseria gonorrhoeae (strain NCCP11945), this protein is Adenylosuccinate synthetase.